The following is a 476-amino-acid chain: Glycogen synthase (476 aa).

Lys-15 contributes to the ADP-alpha-D-glucose binding site.

The protein belongs to the glycosyltransferase 1 family. Bacterial/plant glycogen synthase subfamily.

The catalysed reaction is [(1-&gt;4)-alpha-D-glucosyl](n) + ADP-alpha-D-glucose = [(1-&gt;4)-alpha-D-glucosyl](n+1) + ADP + H(+). The protein operates within glycan biosynthesis; glycogen biosynthesis. Its function is as follows. Synthesizes alpha-1,4-glucan chains using ADP-glucose. The chain is Glycogen synthase from Bacillus cereus (strain ATCC 14579 / DSM 31 / CCUG 7414 / JCM 2152 / NBRC 15305 / NCIMB 9373 / NCTC 2599 / NRRL B-3711).